Here is a 333-residue protein sequence, read N- to C-terminus: L-lactate dehydrogenase A chain (333 aa).

Ala2 carries the post-translational modification N-acetylalanine. Residues 30–58 and Arg100 contribute to the NAD(+) site; that span reads GAVG…MEDK. The substrate site is built by Arg107, Asn139, and Arg170. Asn139 contacts NAD(+). The active-site Proton acceptor is the His194. Thr249 contributes to the substrate binding site.

Belongs to the LDH/MDH superfamily. LDH family. In terms of assembly, homotetramer.

Its subcellular location is the cytoplasm. It carries out the reaction (S)-lactate + NAD(+) = pyruvate + NADH + H(+). The protein operates within fermentation; pyruvate fermentation to lactate; (S)-lactate from pyruvate: step 1/1. Functionally, interconverts simultaneously and stereospecifically pyruvate and lactate with concomitant interconversion of NADH and NAD(+). The sequence is that of L-lactate dehydrogenase A chain (ldha) from Squalus acanthias (Spiny dogfish).